We begin with the raw amino-acid sequence, 209 residues long: MEQQKIPQATAKRLPLYYRFIQNLSLSGKQRVSSAELSEAVKVDSATIRRDFSYFGALGKKGYGYNVNYLLSFFRETLDQDDITRVALIGVGNLGTAFLHYNFTKNNNTKIEMAFDISEEKVGTEIGGIPVYHLDELEERLSSDIQVAILTVPATVAQSVADRLAETNVHGILNFTPARLNVSDNIRIHHIDLAVELQTLVYFLKNYPQ.

Positions 16–55 form a DNA-binding region, H-T-H motif; sequence LYYRFIQNLSLSGKQRVSSAELSEAVKVDSATIRRDFSYF. Position 90–95 (90–95) interacts with NAD(+); the sequence is GVGNLG.

The protein belongs to the transcriptional regulatory Rex family. As to quaternary structure, homodimer.

Its subcellular location is the cytoplasm. In terms of biological role, modulates transcription in response to changes in cellular NADH/NAD(+) redox state. This Bacillus cereus (strain Q1) protein is Redox-sensing transcriptional repressor Rex.